A 988-amino-acid chain; its full sequence is Kinesin-like protein CIN8 (988 aa).

Residues 33 to 470 enclose the Kinesin motor domain; it reads NILVAVRCRG…LEYASKAKNI (438 aa). 125–132 is an ATP binding site; sequence GMTSTGKT. A disordered region spans residues 206–301; sequence FDSNVNGTSA…NSNNTNQQQS (96 aa). Over residues 208-237 the composition is skewed to low complexity; it reads SNVNGTSASGSSSRSSSRNNSPRSAPDNSR. Over residues 248 to 280 the composition is skewed to polar residues; that stretch reads HNTTGNSKISNNNHNKFSRFKQTSQESTRAHAS. Positions 281–301 are enriched in low complexity; that stretch reads NNHQNVHIPNNNSNNTNQQQS. Coiled-coil stretches lie at residues 514-619 and 707-769; these read EHYK…ELQQ and KLAE…MQNF. Over residues 965 to 974 the composition is skewed to basic and acidic residues; it reads ALQEKRKPED. The interval 965 to 988 is disordered; it reads ALQEKRKPEDEVLLQAKLQRRNPD.

The protein belongs to the TRAFAC class myosin-kinesin ATPase superfamily. Kinesin family. BimC subfamily.

It localises to the cytoplasm. Its subcellular location is the cytoskeleton. The protein localises to the spindle. Its function is as follows. Elongates the mitotic spindle by interacting with spindle microtubules to generate an outward force pushing spindle poles apart. Following spindle assembly, CIN8 and KIP1 apparently act to oppose a force, possibly generated by KAR3, that draws separated poles back together. The polypeptide is Kinesin-like protein CIN8 (CIN8) (Candida glabrata (strain ATCC 2001 / BCRC 20586 / JCM 3761 / NBRC 0622 / NRRL Y-65 / CBS 138) (Yeast)).